We begin with the raw amino-acid sequence, 101 residues long: Alkene monooxygenase system, effector subunit (101 aa).

Belongs to the TmoD/XamoD family. As to quaternary structure, monomer. The alkene monooxygenase multicomponent enzyme system is composed of an electron transfer component and a monooxygenase component interacting with the effector protein XamoD. The electron transfer component is composed of a ferredoxin reductase (XamoF) and a ferredoxin (XamoC), and the monooxygenase component is formed by a heterohexamer (dimer of heterotrimers) of two alpha subunits (XamoA), two beta subunits (XamoE) and two gamma subunits (XamoB).

It is found in the cytoplasm. Its function is as follows. Effector component of the alkene monooxygenase multicomponent enzyme system which catalyzes the O2- and NADH-dependent epoxidation of short chain (C2 to C6) alkenes to their corresponding epoxides. One possible role of this small protein might be to facilitate electron transfer between the reductase and ferredoxin components. This is Alkene monooxygenase system, effector subunit from Xanthobacter autotrophicus (strain ATCC BAA-1158 / Py2).